A 158-amino-acid polypeptide reads, in one-letter code: Dysbindin domain-containing protein 1 (158 aa).

The interval 1-38 (MEPSEGASPGGLVKEVDMPQAALSAPVPVTGTSGQSPM) is disordered. A phosphoserine mark is found at serine 95 and serine 119. The disordered stretch occupies residues 96-158 (DDENVASDSH…ILTVERPKED (63 aa)). Positions 125–141 (TRAEQNREKQPFGDPER) are enriched in basic and acidic residues.

The protein belongs to the dysbindin family.

In Bos taurus (Bovine), this protein is Dysbindin domain-containing protein 1 (DBNDD1).